Reading from the N-terminus, the 308-residue chain is Zinc finger protein unc-98 (308 aa).

2 C2H2-type zinc fingers span residues 111–133 and 139–161; these read YKCR…ERIH and YVCG…AAQH. The segment at 166–186 adopts a C2H2-type 3; degenerate zinc-finger fold; it reads GFKCDCGRTFFSYTEMLYHKH. Residues 244–266 form a C2H2-type 4 zinc finger; sequence YICEYCSKSYSDSRGLAYHMYSH.

It localises to the nucleus. It is found in the cytoplasm. In terms of biological role, probable transcription factor. Required for muscle structure. Its dual subcellular localization suggests that it may function both as a muscle adhesion complex protein and as a transcription factor, or work together with transcription factors, to influence gene expression. Thought to act as a molecular bridge between unc-97 and mhc-a at the M-line of muscles, possibly in a signaling role. This Caenorhabditis briggsae protein is Zinc finger protein unc-98.